Reading from the N-terminus, the 636-residue chain is Threonine--tRNA ligase (636 aa).

The region spanning 1-63 is the TGS domain; sequence MNEINVTLPD…ADGARVEIIT (63 aa). Residues 243–534 form a catalytic region; it reads DHRKLGRELD…LIEHFAGNFP (292 aa). The Zn(2+) site is built by cysteine 335, histidine 386, and histidine 511.

It belongs to the class-II aminoacyl-tRNA synthetase family. Homodimer. The cofactor is Zn(2+).

The protein localises to the cytoplasm. The catalysed reaction is tRNA(Thr) + L-threonine + ATP = L-threonyl-tRNA(Thr) + AMP + diphosphate + H(+). Catalyzes the attachment of threonine to tRNA(Thr) in a two-step reaction: L-threonine is first activated by ATP to form Thr-AMP and then transferred to the acceptor end of tRNA(Thr). Also edits incorrectly charged L-seryl-tRNA(Thr). The sequence is that of Threonine--tRNA ligase from Citrifermentans bemidjiense (strain ATCC BAA-1014 / DSM 16622 / JCM 12645 / Bem) (Geobacter bemidjiensis).